The following is a 364-amino-acid chain: MAAVRKPVLLGLRDTAVKGCPKGPSAWTSSKLGGVPDALPAVTTPGPQCGRCAQPLTLVVQVYCPLDGSPFHRLLYVFACARPGCGNSQTRSWKVFRSQCLQVPEKETWNAQNQSDSLAAENWCEGSQDWGSDTEETPPPPASDLGSDSNDVRALDWTEKLQALRLQDTALAVTCPSPSGEGLTVPTAVPQFQPYYICVAEEEDYGSVVDLDHAHSLLQEYQRREGVDMEQLLSLGSSDGDEKYEKTTVSSGDPTFYRFMKRIAACQEQILRYSWSGEPLFLSCPTFEVSEVPACSGCGGQRTFEFQLMPALVSMLSSANLGLAVEFGTILVYTCKQSCWPPNQQMPMEEFCVLQEDPDEFLFK.

At alanine 2 the chain carries N-acetylalanine. The disordered stretch occupies residues 125-150 (EGSQDWGSDTEETPPPPASDLGSDSN).

Functionally, over-expression suppresses AP1, CREB, NFAT, and NF-kB transcriptional activation, and delays cell cycle progression at S phase. In Mus musculus (Mouse), this protein is Programmed cell death protein 2-like (Pdcd2l).